Here is a 661-residue protein sequence, read N- to C-terminus: tRNA uridine 5-carboxymethylaminomethyl modification enzyme MnmG (661 aa).

13 to 18 provides a ligand contact to FAD; sequence GGGHAG. An NAD(+)-binding site is contributed by 285–299; that stretch reads GPRYCPSVEDKINRF.

The protein belongs to the MnmG family. As to quaternary structure, homodimer. Heterotetramer of two MnmE and two MnmG subunits. FAD serves as cofactor.

It localises to the cytoplasm. NAD-binding protein involved in the addition of a carboxymethylaminomethyl (cmnm) group at the wobble position (U34) of certain tRNAs, forming tRNA-cmnm(5)s(2)U34. This is tRNA uridine 5-carboxymethylaminomethyl modification enzyme MnmG from Acidovorax sp. (strain JS42).